A 92-amino-acid polypeptide reads, in one-letter code: Protein LSO2 (92 aa).

Basic and acidic residues-rich tracts occupy residues 1 to 10 (MGKRFSESAA) and 38 to 72 (EASK…ERDA). The segment at 1 to 92 (MGKRFSESAA…KGGKGKRKMK (92 aa)) is disordered. Residues 17-80 (ARKRDQAHAK…DALLTAEEEQ (64 aa)) adopt a coiled-coil conformation.

This sequence belongs to the CCDC124 family. Associates with translationally inactive ribosomes in the nonrotated state. LSO2 bridges the decoding sites of the small with the GTPase activating center (GAC) of the large subunit. This position allows accommodation of the DOM34-dependent ribosome recycling system, which splits LSO2-containing ribosomes.

Its subcellular location is the nucleus. It localises to the cytoplasm. Functionally, ribosome-binding protein involved in ribosome hibernation by associating with translationally inactive ribosomes. Required for translational recovery after starvation from stationary phase. May facilitate rapid translation reactivation by stabilizing the recycling-competent state of inactive ribosomes. The chain is Protein LSO2 from Saccharomyces cerevisiae (strain ATCC 204508 / S288c) (Baker's yeast).